Consider the following 174-residue polypeptide: UPF0316 protein lin1888 (174 aa).

The next 3 helical transmembrane spans lie at 4-24, 36-56, and 62-82; these read GIFIVATIFVVNILYVTIYTV, LAALSSVFEMIIYVVALSLVL, and IANVLAYAVGFGVGIIVGMKI.

It belongs to the UPF0316 family.

The protein resides in the cell membrane. The polypeptide is UPF0316 protein lin1888 (Listeria innocua serovar 6a (strain ATCC BAA-680 / CLIP 11262)).